We begin with the raw amino-acid sequence, 172 residues long: 2S seed storage-like protein (172 aa).

The first 35 residues, 1-35 (MGVFSPSTTRLTLKWFSLSVALFLLFHWGIPSVDG), serve as a signal peptide directing secretion. Residues 108 to 172 (FMDSDSQEDA…RYSMTGSSFK (65 aa)) form a disordered region. A compositionally biased stretch (basic and acidic residues) spans 151–160 (EPPRRCDIQR).

Belongs to the 2S seed storage albumins family.

The sequence is that of 2S seed storage-like protein from Picea glauca (White spruce).